The following is a 464-amino-acid chain: ATP synthase subunit beta 2 (464 aa).

Residue 153–160 (GGAGVGKT) participates in ATP binding.

It belongs to the ATPase alpha/beta chains family. In terms of assembly, F-type ATPases have 2 components, CF(1) - the catalytic core - and CF(0) - the membrane proton channel. CF(1) has five subunits: alpha(3), beta(3), gamma(1), delta(1), epsilon(1). CF(0) has three main subunits: a(1), b(2) and c(9-12). The alpha and beta chains form an alternating ring which encloses part of the gamma chain. CF(1) is attached to CF(0) by a central stalk formed by the gamma and epsilon chains, while a peripheral stalk is formed by the delta and b chains.

It localises to the cell inner membrane. It catalyses the reaction ATP + H2O + 4 H(+)(in) = ADP + phosphate + 5 H(+)(out). Produces ATP from ADP in the presence of a proton gradient across the membrane. The catalytic sites are hosted primarily by the beta subunits. In Paraburkholderia xenovorans (strain LB400), this protein is ATP synthase subunit beta 2.